Here is a 411-residue protein sequence, read N- to C-terminus: Tyrosine--tRNA ligase (411 aa).

The 'HIGH' region motif lies at 48 to 57 (PTAPDIHLGH). A 'KMSKS' region motif is present at residues 232–236 (KMSKS). Lysine 235 is a binding site for ATP. One can recognise an S4 RNA-binding domain in the interval 347–409 (VLLPKVLFSA…GKRRFLKIIF (63 aa)).

This sequence belongs to the class-I aminoacyl-tRNA synthetase family. TyrS type 2 subfamily. As to quaternary structure, homodimer.

The protein localises to the cytoplasm. It catalyses the reaction tRNA(Tyr) + L-tyrosine + ATP = L-tyrosyl-tRNA(Tyr) + AMP + diphosphate + H(+). Catalyzes the attachment of tyrosine to tRNA(Tyr) in a two-step reaction: tyrosine is first activated by ATP to form Tyr-AMP and then transferred to the acceptor end of tRNA(Tyr). The protein is Tyrosine--tRNA ligase of Carboxydothermus hydrogenoformans (strain ATCC BAA-161 / DSM 6008 / Z-2901).